The primary structure comprises 519 residues: Dihydropyrimidinase (519 aa).

Residues histidine 67 and histidine 69 each coordinate Zn(2+). Position 79 is a phosphoserine (serine 79). Zn(2+) is bound at residue lysine 159. At lysine 159 the chain carries N6-carboxylysine. Residue tyrosine 164 participates in substrate binding. Zn(2+) is bound by residues histidine 192 and histidine 248. Position 256 is an N6-succinyllysine (lysine 256). Position 326 (aspartate 326) interacts with Zn(2+). Residue asparagine 347 participates in substrate binding. Position 510 is a phosphothreonine (threonine 510).

Belongs to the metallo-dependent hydrolases superfamily. Hydantoinase/dihydropyrimidinase family. As to quaternary structure, homotetramer. The cofactor is Zn(2+). In terms of processing, carboxylation allows a single lysine to coordinate two zinc ions.

It carries out the reaction 5,6-dihydrouracil + H2O = 3-(carbamoylamino)propanoate + H(+). Its function is as follows. Catalyzes the second step of the reductive pyrimidine degradation, the reversible hydrolytic ring opening of dihydropyrimidines. Can catalyze the ring opening of 5,6-dihydrouracil to N-carbamyl-alanine and of 5,6-dihydrothymine to N-carbamyl-amino isobutyrate. The sequence is that of Dihydropyrimidinase (Dpys) from Rattus norvegicus (Rat).